The primary structure comprises 448 residues: Bifunctional protein GlmU (448 aa).

Residues 1–230 (MRSCLSIVLA…FDNIVGINNC (230 aa)) form a pyrophosphorylase region. UDP-N-acetyl-alpha-D-glucosamine contacts are provided by residues 9 to 12 (LAAG), K23, Q76, and 81 to 82 (GT). Position 106 (D106) interacts with Mg(2+). Positions 142, 156, 171, and 228 each coordinate UDP-N-acetyl-alpha-D-glucosamine. Residue N228 coordinates Mg(2+). Residues 231-251 (FELFEADSLWQKRKARDLMLS) are linker. Residues 252-448 (GVTILKPETV…VRLSGNQQKK (197 aa)) form an N-acetyltransferase region. 2 residues coordinate UDP-N-acetyl-alpha-D-glucosamine: R317 and K335. H347 serves as the catalytic Proton acceptor. 2 residues coordinate UDP-N-acetyl-alpha-D-glucosamine: Y350 and N361. Residues A364, 370 to 371 (NY), S389, S407, and R424 each bind acetyl-CoA.

This sequence in the N-terminal section; belongs to the N-acetylglucosamine-1-phosphate uridyltransferase family. In the C-terminal section; belongs to the transferase hexapeptide repeat family. As to quaternary structure, homotrimer. It depends on Mg(2+) as a cofactor.

It localises to the cytoplasm. The catalysed reaction is alpha-D-glucosamine 1-phosphate + acetyl-CoA = N-acetyl-alpha-D-glucosamine 1-phosphate + CoA + H(+). It carries out the reaction N-acetyl-alpha-D-glucosamine 1-phosphate + UTP + H(+) = UDP-N-acetyl-alpha-D-glucosamine + diphosphate. It functions in the pathway nucleotide-sugar biosynthesis; UDP-N-acetyl-alpha-D-glucosamine biosynthesis; N-acetyl-alpha-D-glucosamine 1-phosphate from alpha-D-glucosamine 6-phosphate (route II): step 2/2. The protein operates within nucleotide-sugar biosynthesis; UDP-N-acetyl-alpha-D-glucosamine biosynthesis; UDP-N-acetyl-alpha-D-glucosamine from N-acetyl-alpha-D-glucosamine 1-phosphate: step 1/1. Its pathway is bacterial outer membrane biogenesis; LPS lipid A biosynthesis. Its function is as follows. Catalyzes the last two sequential reactions in the de novo biosynthetic pathway for UDP-N-acetylglucosamine (UDP-GlcNAc). The C-terminal domain catalyzes the transfer of acetyl group from acetyl coenzyme A to glucosamine-1-phosphate (GlcN-1-P) to produce N-acetylglucosamine-1-phosphate (GlcNAc-1-P), which is converted into UDP-GlcNAc by the transfer of uridine 5-monophosphate (from uridine 5-triphosphate), a reaction catalyzed by the N-terminal domain. This Bartonella quintana (strain Toulouse) (Rochalimaea quintana) protein is Bifunctional protein GlmU.